A 48-amino-acid polypeptide reads, in one-letter code: Delta-stichotoxin-Hcr1e (48 aa).

3 disulfide bridges follow: C3-C43, C5-C33, and C26-C44.

The protein belongs to the sea anemone sodium channel inhibitory toxin family. Type II subfamily.

It localises to the secreted. Its subcellular location is the nematocyst. Its function is as follows. Binds to site 3 of voltage-gated sodium channels and inhibits the inactivation process. This chain is Delta-stichotoxin-Hcr1e, found in Radianthus crispa (Leathery sea anemone).